Consider the following 152-residue polypeptide: UPF0225 protein YchJ (152 aa).

It belongs to the UPF0225 family.

In Escherichia coli O17:K52:H18 (strain UMN026 / ExPEC), this protein is UPF0225 protein YchJ.